A 633-amino-acid polypeptide reads, in one-letter code: Probable potassium transport system protein Kup 2 (633 aa).

12 helical membrane passes run 18–38, 61–81, 107–127, 143–163, 176–196, 211–231, 255–275, 293–313, 345–365, 371–391, 402–422, and 429–449; these read FVGL…TSPL, LISL…VLFL, VPVL…DAMI, ITPA…IVLF, FFGP…VIHI, ALSF…AVFL, WFVL…ALVL, ALLP…QAVI, IYVP…IFSF, LATA…MLAF, FMLA…FLAA, and DGGW…WTWT.

Belongs to the HAK/KUP transporter (TC 2.A.72) family.

It is found in the cell inner membrane. It carries out the reaction K(+)(in) + H(+)(in) = K(+)(out) + H(+)(out). Its function is as follows. Transport of potassium into the cell. Likely operates as a K(+):H(+) symporter. The polypeptide is Probable potassium transport system protein Kup 2 (Rhizobium etli (strain ATCC 51251 / DSM 11541 / JCM 21823 / NBRC 15573 / CFN 42)).